The following is a 2222-amino-acid chain: Voltage-dependent R-type calcium channel subunit alpha-1E (2222 aa).

At 1 to 40 (MALYNPIPVRQNCFTVNRSLFIFGEDNIVRKYAKKLIDWP) the chain is on the cytoplasmic side. An I repeat occupies 27–305 (NIVRKYAKKL…LVLGVLSGEF (279 aa)). A helical transmembrane segment spans residues 41–59 (PFEYMILATIIANCIVLAL). Over 60–78 (EQHLPEDDKTPMSRRLEKT) the chain is Extracellular. A helical membrane pass occupies residues 79 to 97 (EPYFIGIFCFEAGIKIVAL). Topologically, residues 98–109 (GFIFHKGSYLRN) are cytoplasmic. The chain crosses the membrane as a helical span at residues 110–124 (GWNVMDFIVVLSGIL). At 125 to 136 (ATAGTHFNTHVD) the chain is on the extracellular side. Residues 137-156 (LRTLRAVRVLRPLKLVSGIP) form a helical membrane-spanning segment. The Cytoplasmic segment spans residues 157-174 (SLQIVLKSIMKAMVPLLQ). Residues 175–195 (IGLLLFFAILMFAIIGLEFYS) traverse the membrane as a helical segment. Residues 196 to 277 (GKLHRACFMN…NTNDALGATW (82 aa)) lie on the Extracellular side of the membrane. Asn205 carries N-linked (GlcNAc...) asparagine glycosylation. The chain crosses the membrane as a helical span at residues 278–301 (NWLYFIPLIIIGSFFVLNLVLGVL). Residues 302 to 427 (SGEFAKERER…ISIRHMVKSQ (126 aa)) are Cytoplasmic-facing. The binding to the beta subunit stretch occupies residues 325–342 (QQIERELNGYRAWIDKAE). Asp377 contacts Ca(2+). At Ser378 the chain carries Phosphoserine. Positions 379, 381, and 383 each coordinate Ca(2+). The residue at position 391 (Thr391) is a Phosphothreonine. Residues 413–657 (ERLLRISIRH…VFLAIAVDNL (245 aa)) form an II repeat. The chain crosses the membrane as a helical span at residues 428–447 (VFYWIVLSVVALNTACVAIV). The Extracellular portion of the chain corresponds to 448–460 (HHNQPQWLTHLLY). Residues 461–480 (YAEFLFLGLFLLEMSLKMYG) traverse the membrane as a helical segment. Topologically, residues 481-489 (MGPRLYFHS) are cytoplasmic. The helical transmembrane segment at 490-508 (SFNCFDFGVTVGSIFEVVW) threads the bilayer. Residues 509-518 (AIFRPGTSFG) are Extracellular-facing. A helical membrane pass occupies residues 519–537 (ISVLRALRLLRIFKITKYW). Topologically, residues 538–556 (ASLRNLVVSLMSSMKSIIS) are cytoplasmic. A helical membrane pass occupies residues 557–576 (LLFLLFLFIVVFALLGMQLF). Residues 577-629 (GGRFNFNDGTPSANFDTFPAAIMTVFQILTGEDWNEVMYNGIRSQGGVSSGMW) are Extracellular-facing. A helical membrane pass occupies residues 630–654 (SAIYFIVLTLFGNYTLLNVFLAIAV). Topologically, residues 655 to 1100 (DNLANAQELT…TNPIRKACHY (446 aa)) are cytoplasmic. Residues 680–727 (LQKAKEVSPMSAPNMPSIERDRRRRHHMSMWEPRSSHLRERRRRHHMS) are disordered. A phosphoserine mark is found at Ser687, Ser696, Ser744, Ser766, and Ser806. Disordered stretches follow at residues 820–944 (NQRS…VPRG) and 1042–1076 (NKTD…RETG). Residues 864–877 (RHRQSQRRSRHRRV) show a composition bias toward basic residues. Positions 884–896 (SASASRSRSASQE) are enriched in low complexity. Residue Ser898 is modified to Phosphoserine. 2 stretches are compositionally biased toward basic and acidic residues: residues 906-935 (DGEK…DLRR) and 1044-1055 (TDGEASPLKEAE). Phosphoserine is present on Ser1049. An III repeat occupies 1092 to 1378 (NPIRKACHYI…IFVALIIITF (287 aa)). A helical membrane pass occupies residues 1101 to 1117 (IVNLRYFEMCILLVIAA). At 1118-1141 (SSIALAAEDPVLTNSERNKVLRYF) the chain is on the extracellular side. Residues 1142-1161 (DYVFTGVFTFEMVIKMIDQG) traverse the membrane as a helical segment. Over 1162–1169 (LILQDGSY) the chain is Cytoplasmic. Residues 1170–1192 (FRDLWNILDFVVVVGALVAFALA) form a helical membrane-spanning segment. At 1193–1206 (NALGTNKGRDIKTI) the chain is on the extracellular side. A helical membrane pass occupies residues 1207–1224 (KSLRVLRVLRPLKTIKRL). Over 1225 to 1243 (PKLKAVFDCVVTSLKNVFN) the chain is Cytoplasmic. A helical transmembrane segment spans residues 1244–1263 (ILIVYKLFMFIFAVIAVQLF). Residues 1264–1350 (KGKFFYCTDS…RGPSRSNRME (87 aa)) are Extracellular-facing. The chain crosses the membrane as a helical span at residues 1351–1374 (MSIFYVVYFVVFPFFFVNIFVALI). Residues 1375–1431 (IITFQEQGDKMMEECSLEKNERACIDFAISAKPLTRYMPQNRHTFQYRVWHFVVSPS) are Cytoplasmic-facing. The stretch at 1415–1678 (NRHTFQYRVW…LFVAVIMDNF (264 aa)) is one IV repeat. A helical transmembrane segment spans residues 1432–1450 (FEYTIMAMIALNTVVLMMK). At 1451–1467 (YYSAPWTYELALKYLNI) the chain is on the extracellular side. Residues 1468–1485 (AFTMVFSLECVLKVIAFG) form a helical membrane-spanning segment. Topologically, residues 1486–1493 (FLNYFRDT) are cytoplasmic. A helical membrane pass occupies residues 1494–1512 (WNIFDFITVIGSITEIILT). At 1513-1523 (DSKLVNTSGFN) the chain is on the extracellular side. Residues Asn1518 and Asn1523 are each glycosylated (N-linked (GlcNAc...) asparagine). Residues 1524-1542 (MSFLKLFRAARLIKLLRQG) traverse the membrane as a helical segment. Residues 1543–1561 (YTIRILLWTFVQSFKALPY) are Cytoplasmic-facing. The chain crosses the membrane as a helical span at residues 1562-1581 (VCLLIAMLFFIYAIIGMQVF). The Extracellular segment spans residues 1582 to 1650 (GNIKLDEESH…NESERCGTDL (69 aa)). Residue Asn1641 is glycosylated (N-linked (GlcNAc...) asparagine). Residues 1651 to 1676 (AYVYFVSFIFFCSFLMLNLFVAVIMD) form a helical membrane-spanning segment. The Cytoplasmic portion of the chain corresponds to 1677-2222 (NFEYLTRDSS…LSDTEEDDKC (546 aa)). Residues 1691-1726 (HHLDEFVRVWAEYDRAACGRIHYTEMYEMLTLMSPP) form the EF-hand domain. 3 residues coordinate Ca(2+): Asp1704, Arg1710, and Glu1715. Residues 1970–2135 (SAHRLNSDSG…QQGQHPSPQH (166 aa)) form a disordered region. Residues 1974–1994 (LNSDSGHKSDTHRSGGRERGR) show a composition bias toward basic and acidic residues. Residues Ser2003 and Ser2022 each carry the phosphoserine modification. Positions 2010–2027 (NSEERGTQADWESPERRQ) are enriched in basic and acidic residues. Over residues 2046 to 2061 (SLSESSIPSISDTSTP) the composition is skewed to low complexity. Polar residues predominate over residues 2104 to 2123 (LASQALESNSACLTESSNSL). The span at 2124–2135 (HPQQGQHPSPQH) shows a compositional bias: low complexity.

It belongs to the calcium channel alpha-1 subunit (TC 1.A.1.11) family. CACNA1E subfamily. Interacts with EFHC1. Voltage-dependent calcium channels are multisubunit complexes, consisting of alpha-1, alpha-2, beta and delta subunits in a 1:1:1:1 ratio. The channel activity is directed by the pore-forming and voltage-sensitive alpha-1 subunit. In many cases, this subunit is sufficient to generate voltage-sensitive calcium channel activity. The auxiliary subunits beta and alpha-2/delta linked by a disulfide bridge regulate the channel activity. In terms of tissue distribution, expressed in central nervous system and in insulinoma.

The protein resides in the membrane. It carries out the reaction Ca(2+)(in) = Ca(2+)(out). Functionally, voltage-sensitive calcium channels (VSCC) mediate the entry of calcium ions into excitable cells and are also involved in a variety of calcium-dependent processes, including muscle contraction, hormone or neurotransmitter release, gene expression, cell motility, cell division and cell death. The isoform alpha-1E gives rise to R-type calcium currents. R-type calcium channels belong to the 'high-voltage activated' (HVA) group and are blocked by nickel. They are however insensitive to dihydropyridines (DHP). Calcium channels containing alpha-1E subunit could be involved in the modulation of firing patterns of neurons which is important for information processing. The polypeptide is Voltage-dependent R-type calcium channel subunit alpha-1E (Cacna1e) (Rattus norvegicus (Rat)).